Here is a 140-residue protein sequence, read N- to C-terminus: Putative pre-16S rRNA nuclease (140 aa).

Belongs to the YqgF nuclease family.

It localises to the cytoplasm. Its function is as follows. Could be a nuclease involved in processing of the 5'-end of pre-16S rRNA. The chain is Putative pre-16S rRNA nuclease from Moorella thermoacetica (strain ATCC 39073 / JCM 9320).